Here is a 346-residue protein sequence, read N- to C-terminus: Annexin A1 (346 aa).

The residue at position 2 (A2) is an N-acetylalanine. S5 is modified (phosphoserine; by TRPM7). Q19 is covalently cross-linked (Isoglutamyl lysine isopeptide (Gln-Lys) (interchain with K-?)). Y21 is subject to Phosphotyrosine; by EGFR. A Phosphoserine; by PKC modification is found at S27. Residues S34 and S37 each carry the phosphoserine modification. T41 bears the Phosphothreonine mark. Annexin repeat units follow at residues 42 to 113 (FNPS…ALLK), 114 to 185 (TPAQ…SLAK), 197 to 269 (DLAD…AIVK), and 273 to 344 (SKPA…ALCG). The residue at position 58 (K58) is an N6-acetyllysine. Positions 59, 60, 62, 97, 100, 105, 127, 129, 131, 132, and 134 each coordinate Ca(2+). T136 bears the Phosphothreonine mark. D171, G210, and R213 together coordinate Ca(2+). Residue K214 forms a Glycyl lysine isopeptide (Lys-Gly) (interchain with G-Cter in SUMO1); alternate linkage. Residue K214 forms a Glycyl lysine isopeptide (Lys-Gly) (interchain with G-Cter in SUMO2); alternate linkage. G215 lines the Ca(2+) pocket. K239 carries the post-translational modification N6-acetyllysine. The Ca(2+) site is built by D253, E255, and L256. A Glycyl lysine isopeptide (Lys-Gly) (interchain with G-Cter in SUMO1) cross-link involves residue K257. Ca(2+)-binding residues include E261, M286, G288, and G290. Position 312 is an N6-acetyllysine (K312). Cysteines 324 and 343 form a disulfide. 3 residues coordinate Ca(2+): L328, E330, and T331. K332 participates in a covalent cross-link: Glycyl lysine isopeptide (Lys-Gly) (interchain with G-Cter in SUMO1). E336 contacts Ca(2+).

It belongs to the annexin family. As to quaternary structure, homodimer; non-covalently linked. Homodimer; linked by transglutamylation. Homodimers linked by transglutamylation are observed in placenta, but not in other tissues. Interacts with S100A11. Heterotetramer, formed by two molecules each of S100A11 and ANXA1. Interacts with DYSF. Interacts with EGFR. Post-translationally, phosphorylated by protein kinase C, EGFR and TRPM7. Phosphorylated in response to EGF treatment. In terms of processing, sumoylated. Proteolytically cleaved by cathepsin CTSG to release the active N-terminal peptide Ac2-26. Detected in resting neutrophils. Detected in peripheral blood T-cells. Detected in extracellular vesicles in blood serum from patients with inflammatory bowel disease, but not in serum from healthy donors. Detected in placenta (at protein level). Detected in liver.

It localises to the nucleus. The protein resides in the cytoplasm. It is found in the cell projection. The protein localises to the cilium. Its subcellular location is the cell membrane. It localises to the membrane. The protein resides in the endosome membrane. It is found in the basolateral cell membrane. The protein localises to the apical cell membrane. Its subcellular location is the lateral cell membrane. It localises to the secreted. The protein resides in the extracellular space. It is found in the extracellular exosome. The protein localises to the cytoplasmic vesicle. Its subcellular location is the secretory vesicle lumen. It localises to the phagocytic cup. The protein resides in the early endosome. It is found in the cytoplasmic vesicle membrane. Plays important roles in the innate immune response as effector of glucocorticoid-mediated responses and regulator of the inflammatory process. Has anti-inflammatory activity. Plays a role in glucocorticoid-mediated down-regulation of the early phase of the inflammatory response. Contributes to the adaptive immune response by enhancing signaling cascades that are triggered by T-cell activation, regulates differentiation and proliferation of activated T-cells. Promotes the differentiation of T-cells into Th1 cells and negatively regulates differentiation into Th2 cells. Has no effect on unstimulated T cells. Negatively regulates hormone exocytosis via activation of the formyl peptide receptors and reorganization of the actin cytoskeleton. Has high affinity for Ca(2+) and can bind up to eight Ca(2+) ions. Displays Ca(2+)-dependent binding to phospholipid membranes. Plays a role in the formation of phagocytic cups and phagosomes. Plays a role in phagocytosis by mediating the Ca(2+)-dependent interaction between phagosomes and the actin cytoskeleton. Its function is as follows. Functions at least in part by activating the formyl peptide receptors and downstream signaling cascades. Promotes chemotaxis of granulocytes and monocytes via activation of the formyl peptide receptors. Promotes rearrangement of the actin cytoskeleton, cell polarization and cell migration. Promotes resolution of inflammation and wound healing. Acts via neutrophil N-formyl peptide receptors to enhance the release of CXCL2. This chain is Annexin A1 (ANXA1), found in Homo sapiens (Human).